We begin with the raw amino-acid sequence, 440 residues long: Probable secretory pathway GDP dissociation inhibitor 1 (440 aa).

The protein belongs to the Rab GDI family.

The sequence is that of Probable secretory pathway GDP dissociation inhibitor 1 (gdi1) from Schizosaccharomyces pombe (strain 972 / ATCC 24843) (Fission yeast).